The following is a 96-amino-acid chain: Putative pterin-4-alpha-carbinolamine dehydratase (96 aa).

It belongs to the pterin-4-alpha-carbinolamine dehydratase family.

It carries out the reaction (4aS,6R)-4a-hydroxy-L-erythro-5,6,7,8-tetrahydrobiopterin = (6R)-L-erythro-6,7-dihydrobiopterin + H2O. This chain is Putative pterin-4-alpha-carbinolamine dehydratase, found in Prochlorococcus marinus (strain SARG / CCMP1375 / SS120).